The following is a 258-amino-acid chain: tRNA pseudouridine synthase A (258 aa).

D52 serves as the catalytic Nucleophile. Y110 provides a ligand contact to substrate.

This sequence belongs to the tRNA pseudouridine synthase TruA family. In terms of assembly, homodimer.

It carries out the reaction uridine(38/39/40) in tRNA = pseudouridine(38/39/40) in tRNA. Functionally, formation of pseudouridine at positions 38, 39 and 40 in the anticodon stem and loop of transfer RNAs. In Francisella tularensis subsp. novicida (strain U112), this protein is tRNA pseudouridine synthase A.